The following is a 299-amino-acid chain: Methionyl-tRNA formyltransferase (299 aa).

Residue 109–112 (SLLP) participates in (6S)-5,6,7,8-tetrahydrofolate binding.

This sequence belongs to the Fmt family.

It catalyses the reaction L-methionyl-tRNA(fMet) + (6R)-10-formyltetrahydrofolate = N-formyl-L-methionyl-tRNA(fMet) + (6S)-5,6,7,8-tetrahydrofolate + H(+). Attaches a formyl group to the free amino group of methionyl-tRNA(fMet). The formyl group appears to play a dual role in the initiator identity of N-formylmethionyl-tRNA by promoting its recognition by IF2 and preventing the misappropriation of this tRNA by the elongation apparatus. This chain is Methionyl-tRNA formyltransferase, found in Dinoroseobacter shibae (strain DSM 16493 / NCIMB 14021 / DFL 12).